A 164-amino-acid polypeptide reads, in one-letter code: Transcriptional repressor NrdR (164 aa).

A zinc finger lies at 3 to 34 (CPKCNYNKSSVVDSRQAEDGNTIRRRRECESC). Residues 49–139 (LLVIKKDGTR…VYKSFKDLDE (91 aa)) form the ATP-cone domain.

It belongs to the NrdR family. It depends on Zn(2+) as a cofactor.

Functionally, negatively regulates transcription of bacterial ribonucleotide reductase nrd genes and operons by binding to NrdR-boxes. The polypeptide is Transcriptional repressor NrdR (Streptococcus equi subsp. zooepidemicus (strain H70)).